The sequence spans 232 residues: Flagellar L-ring protein (232 aa).

Positions 1-21 (MQKNAAHTYAISSLLVLSLTG) are cleaved as a signal peptide. The N-palmitoyl cysteine moiety is linked to residue Cys22. Cys22 carries the S-diacylglycerol cysteine lipid modification.

It belongs to the FlgH family. As to quaternary structure, the basal body constitutes a major portion of the flagellar organelle and consists of four rings (L,P,S, and M) mounted on a central rod.

It is found in the cell outer membrane. The protein resides in the bacterial flagellum basal body. Assembles around the rod to form the L-ring and probably protects the motor/basal body from shearing forces during rotation. In Escherichia coli O7:K1 (strain IAI39 / ExPEC), this protein is Flagellar L-ring protein.